The primary structure comprises 483 residues: 23S rRNA (uracil(1939)-C(5))-methyltransferase RlmD (483 aa).

Positions 1–11 are enriched in basic residues; the sequence is MTGLGKRRPAR. Positions 1–36 are disordered; it reads MTGLGKRRPARSRSGVSGLRERRQPASVERSAGSEG. One can recognise a TRAM domain in the interval 29 to 90; it reads ERSAGSEGRR…KRFDEAHVSE (62 aa). The [4Fe-4S] cluster site is built by cysteine 103, cysteine 109, cysteine 112, and cysteine 189. 6 residues coordinate S-adenosyl-L-methionine: glutamine 298, phenylalanine 332, asparagine 337, glutamate 353, aspartate 379, and aspartate 401. The active-site Nucleophile is cysteine 427.

This sequence belongs to the class I-like SAM-binding methyltransferase superfamily. RNA M5U methyltransferase family. RlmD subfamily.

The catalysed reaction is uridine(1939) in 23S rRNA + S-adenosyl-L-methionine = 5-methyluridine(1939) in 23S rRNA + S-adenosyl-L-homocysteine + H(+). Catalyzes the formation of 5-methyl-uridine at position 1939 (m5U1939) in 23S rRNA. In Halomonas elongata (strain ATCC 33173 / DSM 2581 / NBRC 15536 / NCIMB 2198 / 1H9), this protein is 23S rRNA (uracil(1939)-C(5))-methyltransferase RlmD.